Here is a 228-residue protein sequence, read N- to C-terminus: Early nodulin-like protein 18 (228 aa).

The signal sequence occupies residues 1–26 (MSPSCSSCVNVLLIMCLMLLSLSADA). The Phytocyanin domain maps to 28–148 (KNYTVGESTG…GQHFMINVTH (121 aa)). N-linked (GlcNAc...) asparagine glycosylation is found at Asn-29, Asn-71, Asn-94, and Asn-145. Cysteines 86 and 136 form a disulfide. The disordered stretch occupies residues 148-211 (HGQGLPDSSS…VHSKKSSSST (64 aa)). Residues 153 to 170 (PDSSSPDDAAAPGPSESS) show a composition bias toward low complexity. A compositionally biased stretch (basic and acidic residues) spans 188–204 (DHPKDIESADDDKEVHS). Ser-204 carries GPI-anchor amidated serine lipidation. A propeptide spans 205-228 (KKSSSSTTKTSLFCFVFMGLFASF) (removed in mature form).

The protein belongs to the early nodulin-like (ENODL) family. Mostly expressed in seedlings, roots and flowers, and, to a lower extent, in leaves, stems and seeds.

It is found in the cell membrane. Functionally, may act as a carbohydrate transporter. The chain is Early nodulin-like protein 18 from Arabidopsis thaliana (Mouse-ear cress).